The chain runs to 126 residues: Ribonuclease P protein component (126 aa).

It belongs to the RnpA family. As to quaternary structure, consists of a catalytic RNA component (M1 or rnpB) and a protein subunit.

It catalyses the reaction Endonucleolytic cleavage of RNA, removing 5'-extranucleotides from tRNA precursor.. Its function is as follows. RNaseP catalyzes the removal of the 5'-leader sequence from pre-tRNA to produce the mature 5'-terminus. It can also cleave other RNA substrates such as 4.5S RNA. The protein component plays an auxiliary but essential role in vivo by binding to the 5'-leader sequence and broadening the substrate specificity of the ribozyme. The sequence is that of Ribonuclease P protein component from Brevibacillus brevis (strain 47 / JCM 6285 / NBRC 100599).